The sequence spans 68 residues: Copper transport protein ATOX1 (68 aa).

The region spanning 1–63 (MPKHEFSVDM…TLGKTGKAVS (63 aa)) is the HMA domain. Residues Cys-12 and Cys-15 each coordinate Cu cation. At Ser-47 the chain carries Phosphoserine. The residue at position 60 (Lys-60) is an N6-acetyllysine.

The protein belongs to the ATX1 family. Homodimer. Interacts with ATP7B. Interacts with ATP7A. Interacts (via dimer form) with SLC31A1 (via C-terminal domain); this interaction improves ATOX1 stability and controls intracellular Cu(I) levels.

Its function is as follows. Binds and deliver cytosolic copper to the copper ATPase proteins. May be important in cellular antioxidant defense. The sequence is that of Copper transport protein ATOX1 from Bos taurus (Bovine).